The sequence spans 207 residues: Nudix hydrolase 4 (207 aa).

In terms of domain architecture, Nudix hydrolase spans 58–194 (GYRQVVGCVP…WMREALEAFI (137 aa)). The short motif at 101-122 (GGWETDESMEEAALRETIEEAG) is the Nudix box element. Glu-116 and Glu-120 together coordinate Mg(2+).

This sequence belongs to the Nudix hydrolase family. The cofactor is Mg(2+). It depends on Mn(2+) as a cofactor. As to expression, expressed in roots, stems and leaves.

The enzyme catalyses ADP-D-ribose + H2O = D-ribose 5-phosphate + AMP + 2 H(+). The catalysed reaction is NAD(+) + H2O = beta-nicotinamide D-ribonucleotide + AMP + 2 H(+). It catalyses the reaction NADH + H2O = reduced beta-nicotinamide D-ribonucleotide + AMP + 2 H(+). Probably mediates the hydrolysis of some nucleoside diphosphate derivatives. In vitro, it can use both NADH and ADP-ribose as substrates; however the relevance of such substrates in vivo is unclear. The chain is Nudix hydrolase 4 (NUDT4) from Arabidopsis thaliana (Mouse-ear cress).